Here is a 3412-residue protein sequence, read N- to C-terminus: Genome polyprotein (3412 aa).

Topologically, residues 1–104 (MSGRKAQGKT…LSSRKRRSNE (104 aa)) are cytoplasmic. The segment at 38–72 (PGPSRGVQGFIFFFLFNILTGKKLTAHLKKLWRML) is hydrophobic; homodimerization of capsid protein C. The propeptide at 102–121 (SNEMALFPLLLLGLLALSGG) is ER anchor for the capsid protein C, removed in mature form by serine protease NS3. A helical membrane pass occupies residues 105 to 125 (MALFPLLLLGLLALSGGVTLV). Topologically, residues 126–244 (RKNRWLLLNV…GERQLQKIER (119 aa)) are extracellular. 2 N-linked (GlcNAc...) asparagine; by host glycosylation sites follow: Asn-134 and Asn-150. Residues 245-265 (WLVRNPFFAVTALAIAYLVGN) form a helical membrane-spanning segment. Residues 266–270 (NTTQR) are Cytoplasmic-facing. Residues 271-285 (VVIALLVLAVGPAYS) form a helical membrane-spanning segment. Topologically, residues 286–730 (AHCIGITDRD…TVFGSAFQGL (445 aa)) are extracellular. 8 disulfides stabilise this stretch: Cys-288–Cys-315, Cys-345–Cys-401, Cys-345–Cys-406, Cys-359–Cys-390, Cys-377–Cys-401, Cys-377–Cys-406, Cys-467–Cys-568, and Cys-585–Cys-615. A fusion peptide region spans residues 383 to 396 (DRGWGNGCGLFGKG). The helical transmembrane segment at 731-751 (FGGLSWITKVIMGAVLIWVGI) threads the bilayer. Residues 752 to 757 (NTRNMT) are Extracellular-facing. Residues 758 to 778 (MSMSMILVGVIMMFLSLGVGA) traverse the membrane as a helical segment. Topologically, residues 779-1132 (DQGCAVNFGK…LVRSWVTAGE (354 aa)) are extracellular. Intrachain disulfides connect Cys-782–Cys-793, Cys-833–Cys-921, Cys-957–Cys-1002, Cys-1058–Cys-1107, Cys-1069–Cys-1091, and Cys-1090–Cys-1094. Residues Asn-908 and Asn-986 are each glycosylated (N-linked (GlcNAc...) asparagine; by host). The chain crosses the membrane as a helical span at residues 1133–1153 (VHAVPFGLVSMMIAMEVVLRR). Topologically, residues 1154–1201 (RQGPKQMLVGGVVLLGAMLVGQVTVLDLVKFVVAVGLHFHEINNGGDA) are cytoplasmic. Residues 1202-1222 (MYMALIASFSIRPGLLMGFGL) form a helical membrane-spanning segment. Over 1223 to 1287 (RTLWSPRERL…ILPLMALMTP (65 aa)) the chain is Lumenal. A helical membrane pass occupies residues 1288 to 1308 (MTMHEVRMATMLFCTVVIIGV). The Cytoplasmic segment spans residues 1309–1355 (LHQNSKDTSMQKTIPIVALTLTSYMGLTQPFLGLCAYMSTQVFGRRS). Residues 1356-1376 (IPVNEALAAAGLVGVLAGLAF) traverse the membrane as a helical segment. The Lumenal segment spans residues 1377-1378 (QD). Residues 1379–1399 (MENFLGPIAVGGILMMLVSVA) form a helical membrane-spanning segment. The Cytoplasmic segment spans residues 1400-1456 (GRVDGLELKKLGEISWEEEAEISGSSSRYDVALSEQGEFKLLSEDKVPWDQIVMTSL). The segment at 1407–1446 (LKKLGEISWEEEAEISGSSSRYDVALSEQGEFKLLSEDKV) is interacts with and activates NS3 protease. The helical intramembrane region spans 1457–1477 (ALVGAAIHPFALLLVLGGWIL). Over 1478–2157 (HIKGARRSGD…RNALSMMPEA (680 aa)) the chain is Cytoplasmic. The Peptidase S7 domain maps to 1485–1665 (SGDVLWDIPT…ELKEESKEEL (181 aa)). Residues His-1537, Asp-1561, and Ser-1622 each act as charge relay system; for serine protease NS3 activity in the active site. The 157-residue stretch at 1669–1825 (PTMLKKGMTT…HSNGEIEDVQ (157 aa)) folds into the Helicase ATP-binding domain. The segment at 1673–1676 (KKGM) is important for RNA-binding. 1682–1689 (FHPGAGKT) is an ATP binding site. A DEAH box motif is present at residues 1773–1776 (DEAH). In terms of domain architecture, Helicase C-terminal spans 1836–1997 (GHEWILADKR…VRGGMVAPLY (162 aa)). Lys-1877 carries the N6-acetyllysine; by host modification. The interval 1942-1963 (AAQRRGRIGRNPNRDGDSYYYS) is disordered. The helical transmembrane segment at 2158–2178 (MTIVMLFLLAGLLTSGAVIFF) threads the bilayer. Residues 2179-2186 (MSPKGMSR) are Lumenal-facing. The helical intramembrane region spans 2187 to 2207 (MSMAMGTMAGSGYLMFLGGVK). Residues 2208 to 2209 (PT) lie on the Lumenal side of the membrane. The chain crosses the membrane as a helical span at residues 2210–2230 (HISYVMLIFFVLMVVVIPEPG). Over 2231-2241 (QQRTIQDNQVA) the chain is Cytoplasmic. A helical membrane pass occupies residues 2242 to 2262 (YLIIGILTLLSVVAANELGML). Over 2263-2293 (EKTKEDFFGKRDITTPSGAIPWSWPDLDLKP) the chain is Lumenal. The segment at residues 2294–2314 (GAAWTVYVGIVTMLSPMLHHW) is an intramembrane region (helical). The Lumenal portion of the chain corresponds to 2315-2360 (IKVEYGNLSLSGIAQSASVLSFMDKGIPFMKMNISVVILLVSGWNS). A helical membrane pass occupies residues 2361–2380 (ITVIPLLCGIGGAMLHWTLI). Over 2381–2421 (LPGIKAQQSKLAQKRVFHGVAKNPVVDGNPTADIEEAPEMP) the chain is Cytoplasmic. A helical membrane pass occupies residues 2422-2442 (ALYEKKLALYLLLALSLMSVA). The Lumenal segment spans residues 2443-2445 (MCR). A helical membrane pass occupies residues 2446–2466 (TPFSLAEGIVLSSAALGPLIE). Topologically, residues 2467-3411 (GNTSLLWNGP…VDADLQPGEL (945 aa)) are cytoplasmic. Positions 2508–2772 (GSASGKTLGE…DVILPIGTRS (265 aa)) constitute an mRNA cap 0-1 NS5-type MT domain. Ser-2563 serves as a coordination point for S-adenosyl-L-methionine. The residue at position 2563 (Ser-2563) is a Phosphoserine. The active-site For 2'-O-MTase activity is the Lys-2568. Residues Gly-2593, Trp-2594, Thr-2611, Leu-2612, Asp-2638, and Val-2639 each coordinate S-adenosyl-L-methionine. Asp-2653 serves as the catalytic For 2'-O-MTase activity. Residue Ile-2654 participates in S-adenosyl-L-methionine binding. Residues Lys-2689 and Glu-2725 each act as for 2'-O-MTase activity in the active site. Tyr-2727 contacts S-adenosyl-L-methionine. Residues 2879–2912 (RKIMKVVNRWLFRHLSREKNPRLCTKEEFIAKVR) carry the Nuclear localization signal motif. Residues Glu-2946, His-2950, Cys-2955, and Cys-2958 each contribute to the Zn(2+) site. Residues 3036–3188 (GGFYADDTAG…RPVDDRFGLA (153 aa)) enclose the RdRp catalytic domain. His-3223, Cys-3239, and Cys-3358 together coordinate Zn(2+).

In the N-terminal section; belongs to the class I-like SAM-binding methyltransferase superfamily. mRNA cap 0-1 NS5-type methyltransferase family. As to quaternary structure, homodimer. Interacts (via N-terminus) with host EXOC1 (via C-terminus); this interaction results in EXOC1 degradation through the proteasome degradation pathway. In terms of assembly, forms heterodimers with envelope protein E in the endoplasmic reticulum and Golgi. Homodimer; in the endoplasmic reticulum and Golgi. Interacts with protein prM. Interacts with non-structural protein 1. As to quaternary structure, homodimer; Homohexamer when secreted. Interacts with envelope protein E. In terms of assembly, interacts (via N-terminus) with serine protease NS3. Forms a heterodimer with serine protease NS3. May form homooligomers. As to quaternary structure, forms a heterodimer with NS2B. Interacts with non-structural protein 2A (via N-terminus). Interacts with NS4B. Interacts with unphosphorylated RNA-directed RNA polymerase NS5; this interaction stimulates RNA-directed RNA polymerase NS5 guanylyltransferase activity. NS3 interacts with host PDCD6IP; this interaction contributes to virion release. In terms of assembly, interacts with serine protease NS3. Homodimer. Interacts with host STAT2; this interaction prevents the establishment of cellular antiviral state. Interacts with serine protease NS3. Interacts with host TRIM23; this interaction leads to NS5 ubiquitination. In terms of processing, specific enzymatic cleavages in vivo yield mature proteins. The nascent capsid protein C contains a C-terminal hydrophobic domain that act as a signal sequence for translocation of prM into the lumen of the ER. Mature capsid protein C is cleaved at a site upstream of this hydrophobic domain by NS3. prM is cleaved in post-Golgi vesicles by a host furin, releasing the mature small envelope protein M, and peptide pr. Non-structural protein 2A-alpha, a C-terminally truncated form of non-structural protein 2A, results from partial cleavage by NS3. Specific enzymatic cleavages in vivo yield mature proteins peptide 2K acts as a signal sequence and is removed from the N-terminus of NS4B by the host signal peptidase in the ER lumen. Signal cleavage at the 2K-4B site requires a prior NS3 protease-mediated cleavage at the 4A-2K site. Cleaved in post-Golgi vesicles by a host furin, releasing the mature small envelope protein M, and peptide pr. This cleavage is incomplete as up to 30% of viral particles still carry uncleaved prM. Post-translationally, N-glycosylated. In terms of processing, N-glycosylated. The excreted form is glycosylated and this is required for efficient secretion of the protein from infected cells. Polyubiquitinated; ubiquitination is probably mediated by host TRIM23 and is prerequisite for NS5-STAT2 interaction. NS5 is not ISGylated or sumoylated. Post-translationally, acetylated by host KAT5. Acetylation modulates NS3 RNA-binding and unwinding activities and plays an important positive role for viral replication. In terms of processing, phosphorylated on serines residues. This phosphorylation may trigger NS5 nuclear localization.

The protein resides in the virion. The protein localises to the host nucleus. Its subcellular location is the host cytoplasm. It localises to the host perinuclear region. It is found in the secreted. The protein resides in the virion membrane. The protein localises to the host endoplasmic reticulum membrane. The enzyme catalyses Selective hydrolysis of -Xaa-Xaa-|-Yaa- bonds in which each of the Xaa can be either Arg or Lys and Yaa can be either Ser or Ala.. It carries out the reaction RNA(n) + a ribonucleoside 5'-triphosphate = RNA(n+1) + diphosphate. It catalyses the reaction a ribonucleoside 5'-triphosphate + H2O = a ribonucleoside 5'-diphosphate + phosphate + H(+). The catalysed reaction is ATP + H2O = ADP + phosphate + H(+). The enzyme catalyses a 5'-end (5'-triphosphoguanosine)-ribonucleoside in mRNA + S-adenosyl-L-methionine = a 5'-end (N(7)-methyl 5'-triphosphoguanosine)-ribonucleoside in mRNA + S-adenosyl-L-homocysteine. It carries out the reaction a 5'-end (N(7)-methyl 5'-triphosphoguanosine)-ribonucleoside in mRNA + S-adenosyl-L-methionine = a 5'-end (N(7)-methyl 5'-triphosphoguanosine)-(2'-O-methyl-ribonucleoside) in mRNA + S-adenosyl-L-homocysteine + H(+). Plays a role in virus budding by binding to the cell membrane and gathering the viral RNA into a nucleocapsid that forms the core of a mature virus particle. During virus entry, may induce genome penetration into the host cytoplasm after hemifusion induced by the surface proteins. Can migrate to the cell nucleus where it modulates host functions. Its function is as follows. Inhibits RNA silencing by interfering with host Dicer. Functionally, prevents premature fusion activity of envelope proteins in trans-Golgi by binding to envelope protein E at pH6.0. After virion release in extracellular space, gets dissociated from E dimers. In terms of biological role, acts as a chaperone for envelope protein E during intracellular virion assembly by masking and inactivating envelope protein E fusion peptide. prM is the only viral peptide matured by host furin in the trans-Golgi network probably to avoid catastrophic activation of the viral fusion activity in acidic Golgi compartment prior to virion release. prM-E cleavage is inefficient, and many virions are only partially matured. These uncleaved prM would play a role in immune evasion. May play a role in virus budding. Exerts cytotoxic effects by activating a mitochondrial apoptotic pathway through M ectodomain. May display a viroporin activity. Its function is as follows. Binds to host cell surface receptor and mediates fusion between viral and cellular membranes. Envelope protein is synthesized in the endoplasmic reticulum in the form of heterodimer with protein prM. They play a role in virion budding in the ER, and the newly formed immature particle is covered with 60 spikes composed of heterodimer between precursor prM and envelope protein E. The virion is transported to the Golgi apparatus where the low pH causes dissociation of PrM-E heterodimers and formation of E homodimers. prM-E cleavage is inefficient, and many virions are only partially matured. These uncleaved prM would play a role in immune evasion. Functionally, involved in immune evasion, pathogenesis and viral replication. Once cleaved off the polyprotein, is targeted to three destinations: the viral replication cycle, the plasma membrane and the extracellular compartment. Essential for viral replication. Required for formation of the replication complex and recruitment of other non-structural proteins to the ER-derived membrane structures. Excreted as a hexameric lipoparticle that plays a role against host immune response. Antagonizing the complement function. Binds to the host macrophages and dendritic cells. Inhibits signal transduction originating from Toll-like receptor 3 (TLR3). In terms of biological role, component of the viral RNA replication complex that functions in virion assembly and antagonizes the host immune response. Required cofactor for the serine protease function of NS3. May have membrane-destabilizing activity and form viroporins. Its function is as follows. Displays three enzymatic activities: serine protease, NTPase and RNA helicase. NS3 serine protease, in association with NS2B, performs its autocleavage and cleaves the polyprotein at dibasic sites in the cytoplasm: C-prM, NS2A-NS2B, NS2B-NS3, NS3-NS4A, NS4A-2K and NS4B-NS5. NS3 RNA helicase binds RNA and unwinds dsRNA in the 3' to 5' direction. Also plays a role in virus assembly. Functionally, regulates the ATPase activity of the NS3 helicase activity. NS4A allows NS3 helicase to conserve energy during unwinding. In terms of biological role, functions as a signal peptide for NS4B and is required for the interferon antagonism activity of the latter. Induces the formation of ER-derived membrane vesicles where the viral replication takes place. Inhibits interferon (IFN)-induced host STAT1 phosphorylation and nuclear translocation, thereby preventing the establishment of cellular antiviral state by blocking the IFN-alpha/beta pathway. Its function is as follows. Replicates the viral (+) and (-) RNA genome, and performs the capping of genomes in the cytoplasm. NS5 methylates viral RNA cap at guanine N-7 and ribose 2'-O positions. Besides its role in RNA genome replication, also prevents the establishment of cellular antiviral state by blocking the interferon-alpha/beta (IFN-alpha/beta) signaling pathway. IFN-I induces binding of NS5 to host IFN-activated transcription factor STAT2, preventing its transcriptional activity. Host TRIM23 is the E3 ligase that interacts with and polyubiquitinates NS5 to promote its binding to STAT2 and trigger IFN-I signaling inhibition. In Aedes aegypti (Yellowfever mosquito), this protein is Genome polyprotein.